Consider the following 104-residue polypeptide: uncharacterized protein (104 aa).

Disordered regions lie at residues 1–20 (MTET…TTRK) and 83–104 (TASA…VAKK). Over residues 83–93 (TASASSSGKKV) the composition is skewed to low complexity. Residues 94 to 104 (VASKKKVVAKK) show a composition bias toward basic residues.

This is an uncharacterized protein from Dictyostelium discoideum (Social amoeba).